A 72-amino-acid chain; its full sequence is Heat-stable enterotoxin A3/A4 (72 aa).

Residues 1–19 (MKKSILFIFLSVLSFSPFA) form the signal peptide. The propeptide occupies 20-53 (QDAKPVESSKEKITLESKKCNIAKKSNKSGPESM). 3 disulfide bridges follow: Cys59/Cys64, Cys60/Cys68, and Cys63/Cys71.

The protein belongs to the heat-stable enterotoxin family.

It is found in the secreted. In terms of biological role, toxin which activates the particulate form of guanylate cyclase and increases cyclic GMP levels within the host intestinal epithelial cells. The polypeptide is Heat-stable enterotoxin A3/A4 (sta3) (Escherichia coli).